We begin with the raw amino-acid sequence, 466 residues long: Cytochrome c-552 (466 aa).

The first 27 residues, 1 to 27, serve as a signal peptide directing secretion; that stretch reads MVRILTKKSFALSALVAASLMASGAMA. Position 87 (histidine 87) interacts with heme c. Heme is bound by residues cysteine 115, cysteine 118, and lysine 119. Positions 153, 156, 157, 195, 198, and 199 each coordinate heme c. 4 residues coordinate Ca(2+): glutamate 201, tyrosine 202, lysine 250, and glutamine 252. Substrate is bound at residue tyrosine 202. A substrate-binding site is contributed by histidine 253. Heme c-binding residues include histidine 264, cysteine 271, cysteine 274, histidine 275, histidine 290, cysteine 303, cysteine 306, histidine 307, and histidine 382.

The protein belongs to the cytochrome c-552 family. It depends on Ca(2+) as a cofactor. The cofactor is heme c.

The protein resides in the periplasm. The catalysed reaction is 6 Fe(III)-[cytochrome c] + NH4(+) + 2 H2O = 6 Fe(II)-[cytochrome c] + nitrite + 8 H(+). It functions in the pathway nitrogen metabolism; nitrate reduction (assimilation). Functionally, catalyzes the reduction of nitrite to ammonia, consuming six electrons in the process. The sequence is that of Cytochrome c-552 from Shewanella woodyi (strain ATCC 51908 / MS32).